The sequence spans 105 residues: Urease subunit beta (105 aa).

Belongs to the urease beta subunit family. Heterotrimer of UreA (gamma), UreB (beta) and UreC (alpha) subunits. Three heterotrimers associate to form the active enzyme.

It is found in the cytoplasm. It carries out the reaction urea + 2 H2O + H(+) = hydrogencarbonate + 2 NH4(+). The protein operates within nitrogen metabolism; urea degradation; CO(2) and NH(3) from urea (urease route): step 1/1. The sequence is that of Urease subunit beta from Prochlorococcus marinus (strain MIT 9313).